The chain runs to 181 residues: TATA-box-binding protein (181 aa).

2 repeat units span residues 7–83 (IVNV…IKEL) and 98–173 (VQNM…SKTL).

It belongs to the TBP family.

Functionally, general factor that plays a role in the activation of archaeal genes transcribed by RNA polymerase. Binds specifically to the TATA box promoter element which lies close to the position of transcription initiation. In Methanococcus maripaludis (strain C6 / ATCC BAA-1332), this protein is TATA-box-binding protein.